We begin with the raw amino-acid sequence, 220 residues long: Adenylate kinase (220 aa).

An ATP-binding site is contributed by 10–15 (GSGKST). Positions 30–59 (ASGDIIRAEIKARTPLGIEMERYLSRGDLI) are NMP. AMP contacts are provided by residues Arg36, 57-59 (DLI), 83-86 (GYPR), and Gln90. Residues 124–161 (GRRICSKCGAVYHVEFNPPKVPGKCDICGGELIQRPDD) form an LID region. Arg125 provides a ligand contact to ATP. Residues Cys128 and Cys131 each coordinate Zn(2+). 134–135 (VY) contacts ATP. 2 residues coordinate Zn(2+): Cys148 and Cys151. Positions 158 and 169 each coordinate AMP. Gly197 serves as a coordination point for ATP.

This sequence belongs to the adenylate kinase family. Monomer.

The protein resides in the cytoplasm. The catalysed reaction is AMP + ATP = 2 ADP. The protein operates within purine metabolism; AMP biosynthesis via salvage pathway; AMP from ADP: step 1/1. Its function is as follows. Catalyzes the reversible transfer of the terminal phosphate group between ATP and AMP. Plays an important role in cellular energy homeostasis and in adenine nucleotide metabolism. This is Adenylate kinase from Pyrococcus abyssi (strain GE5 / Orsay).